The sequence spans 41 residues: Ostricacin-2 (41 aa).

Cystine bridges form between Cys8/Cys36, Cys15/Cys30, and Cys20/Cys37.

It is found in the secreted. Functionally, has antibacterial activity against the Gram-positive bacterium S.aureus 1056 MRSA (MIC=1.25 ug/ml) and the Gram-negative bacterium E.coli O157:H7 (MIC=0.96 ug/ml). Has antifungal activity against the yeast C.albicans 3153A (MIC=6.20 ug/ml). This Struthio camelus (Common ostrich) protein is Ostricacin-2.